Reading from the N-terminus, the 132-residue chain is Small ribosomal subunit protein uS8 (132 aa).

This sequence belongs to the universal ribosomal protein uS8 family. As to quaternary structure, part of the 30S ribosomal subunit. Contacts proteins S5 and S12.

Its function is as follows. One of the primary rRNA binding proteins, it binds directly to 16S rRNA central domain where it helps coordinate assembly of the platform of the 30S subunit. The polypeptide is Small ribosomal subunit protein uS8 (Macrococcus caseolyticus (strain JCSC5402) (Macrococcoides caseolyticum)).